A 45-amino-acid polypeptide reads, in one-letter code: Large ribosomal subunit protein bL34 (45 aa).

The disordered stretch occupies residues M1–V45. A compositionally biased stretch (basic residues) spans S10–V45.

This sequence belongs to the bacterial ribosomal protein bL34 family.

This Parasynechococcus marenigrum (strain WH8102) protein is Large ribosomal subunit protein bL34.